Consider the following 228-residue polypeptide: ATP synthase subunit a (228 aa).

A run of 6 helical transmembrane segments spans residues 19–39 (AIYI…AVAV), 81–101 (LIAT…IPGF), 107–127 (SLNL…FEGI), 136–156 (FAGF…IEVI), 178–198 (LFLL…PYAL), and 204–224 (ILQA…AVVV).

Belongs to the ATPase A chain family. As to quaternary structure, F-type ATPases have 2 components, CF(1) - the catalytic core - and CF(0) - the membrane proton channel. CF(1) has five subunits: alpha(3), beta(3), gamma(1), delta(1), epsilon(1). CF(0) has three main subunits: a(1), b(2) and c(9-12). The alpha and beta chains form an alternating ring which encloses part of the gamma chain. CF(1) is attached to CF(0) by a central stalk formed by the gamma and epsilon chains, while a peripheral stalk is formed by the delta and b chains.

The protein localises to the cell inner membrane. Key component of the proton channel; it plays a direct role in the translocation of protons across the membrane. This Campylobacter hominis (strain ATCC BAA-381 / DSM 21671 / CCUG 45161 / LMG 19568 / NCTC 13146 / CH001A) protein is ATP synthase subunit a.